The chain runs to 254 residues: 4-hydroxy-tetrahydrodipicolinate reductase (254 aa).

7–12 (GASGRI) serves as a coordination point for NAD(+). NADP(+) is bound at residue arginine 35. NAD(+)-binding positions include 91 to 93 (GTT) and 115 to 118 (AHNM). The active-site Proton donor/acceptor is histidine 147. Histidine 148 provides a ligand contact to (S)-2,3,4,5-tetrahydrodipicolinate. The active-site Proton donor is lysine 151. 157–158 (GT) lines the (S)-2,3,4,5-tetrahydrodipicolinate pocket.

This sequence belongs to the DapB family.

Its subcellular location is the cytoplasm. It carries out the reaction (S)-2,3,4,5-tetrahydrodipicolinate + NAD(+) + H2O = (2S,4S)-4-hydroxy-2,3,4,5-tetrahydrodipicolinate + NADH + H(+). The catalysed reaction is (S)-2,3,4,5-tetrahydrodipicolinate + NADP(+) + H2O = (2S,4S)-4-hydroxy-2,3,4,5-tetrahydrodipicolinate + NADPH + H(+). It functions in the pathway amino-acid biosynthesis; L-lysine biosynthesis via DAP pathway; (S)-tetrahydrodipicolinate from L-aspartate: step 4/4. Its function is as follows. Catalyzes the conversion of 4-hydroxy-tetrahydrodipicolinate (HTPA) to tetrahydrodipicolinate. In Helicobacter pylori (strain Shi470), this protein is 4-hydroxy-tetrahydrodipicolinate reductase.